The primary structure comprises 556 residues: 2-succinyl-5-enolpyruvyl-6-hydroxy-3-cyclohexene-1-carboxylate synthase (556 aa).

This sequence belongs to the TPP enzyme family. MenD subfamily. As to quaternary structure, homodimer. The cofactor is Mg(2+). It depends on Mn(2+) as a cofactor. Thiamine diphosphate is required as a cofactor.

It catalyses the reaction isochorismate + 2-oxoglutarate + H(+) = 5-enolpyruvoyl-6-hydroxy-2-succinyl-cyclohex-3-ene-1-carboxylate + CO2. The protein operates within quinol/quinone metabolism; 1,4-dihydroxy-2-naphthoate biosynthesis; 1,4-dihydroxy-2-naphthoate from chorismate: step 2/7. Its pathway is quinol/quinone metabolism; menaquinone biosynthesis. Functionally, catalyzes the thiamine diphosphate-dependent decarboxylation of 2-oxoglutarate and the subsequent addition of the resulting succinic semialdehyde-thiamine pyrophosphate anion to isochorismate to yield 2-succinyl-5-enolpyruvyl-6-hydroxy-3-cyclohexene-1-carboxylate (SEPHCHC). The chain is 2-succinyl-5-enolpyruvyl-6-hydroxy-3-cyclohexene-1-carboxylate synthase from Shigella boydii serotype 4 (strain Sb227).